A 55-amino-acid polypeptide reads, in one-letter code: uncharacterized protein (55 aa).

This is an uncharacterized protein from Rickettsia prowazekii (strain Madrid E).